We begin with the raw amino-acid sequence, 64 residues long: U-poneritoxin(01)-Om1a (64 aa).

The signal sequence occupies residues 1-27 (MKPSGLTFAFLVVFMMAIMYNSVQVTA). A propeptide spanning residues 28–45 (DADADAEAEALANALAEA) is cleaved from the precursor. A Methionine amide modification is found at methionine 62.

Post-translationally, truncated sequences of this peptide have also been found in the venom. It is possible they have been cleaved in the venom. Expressed by the venom gland.

The protein localises to the secreted. Functionally, antimicrobial peptide with activities against E.coli (MIC=1.3 uM), S.aureus (MIC=3.1 uM), and S.cerevisiae (MIC=50 uM). Also shows histamine-releasing activity (32.9% at 10 uM). Does not show hemolytic activity, even at 50 uM. It is a short peptide for which no alpha-helical region has been predicted. This is U-poneritoxin(01)-Om1a from Odontomachus monticola (Trap-jaw ant).